A 267-amino-acid polypeptide reads, in one-letter code: Hydroxyethylthiazole kinase 2 (267 aa).

Met41 provides a ligand contact to substrate. Residues Lys116 and Thr166 each contribute to the ATP site. Gly193 is a binding site for substrate.

This sequence belongs to the Thz kinase family. The cofactor is Mg(2+).

It catalyses the reaction 5-(2-hydroxyethyl)-4-methylthiazole + ATP = 4-methyl-5-(2-phosphooxyethyl)-thiazole + ADP + H(+). It functions in the pathway cofactor biosynthesis; thiamine diphosphate biosynthesis; 4-methyl-5-(2-phosphoethyl)-thiazole from 5-(2-hydroxyethyl)-4-methylthiazole: step 1/1. Functionally, catalyzes the phosphorylation of the hydroxyl group of 4-methyl-5-beta-hydroxyethylthiazole (THZ). This is Hydroxyethylthiazole kinase 2 from Streptococcus pneumoniae (strain 70585).